Consider the following 362-residue polypeptide: UDP-N-acetylglucosamine--N-acetylmuramyl-(pentapeptide) pyrophosphoryl-undecaprenol N-acetylglucosamine transferase (362 aa).

UDP-N-acetyl-alpha-D-glucosamine contacts are provided by residues 15 to 17 (TGG), N127, R165, S191, I247, 266 to 271 (ALTVSE), and Q292.

The protein belongs to the glycosyltransferase 28 family. MurG subfamily.

The protein resides in the cell inner membrane. It carries out the reaction di-trans,octa-cis-undecaprenyl diphospho-N-acetyl-alpha-D-muramoyl-L-alanyl-D-glutamyl-meso-2,6-diaminopimeloyl-D-alanyl-D-alanine + UDP-N-acetyl-alpha-D-glucosamine = di-trans,octa-cis-undecaprenyl diphospho-[N-acetyl-alpha-D-glucosaminyl-(1-&gt;4)]-N-acetyl-alpha-D-muramoyl-L-alanyl-D-glutamyl-meso-2,6-diaminopimeloyl-D-alanyl-D-alanine + UDP + H(+). The protein operates within cell wall biogenesis; peptidoglycan biosynthesis. In terms of biological role, cell wall formation. Catalyzes the transfer of a GlcNAc subunit on undecaprenyl-pyrophosphoryl-MurNAc-pentapeptide (lipid intermediate I) to form undecaprenyl-pyrophosphoryl-MurNAc-(pentapeptide)GlcNAc (lipid intermediate II). The sequence is that of UDP-N-acetylglucosamine--N-acetylmuramyl-(pentapeptide) pyrophosphoryl-undecaprenol N-acetylglucosamine transferase from Shewanella baltica (strain OS185).